The following is a 147-amino-acid chain: NADH-quinone oxidoreductase subunit A (147 aa).

The next 3 helical transmembrane spans lie at F16–F36, F68–W88, and V98–V118.

The protein belongs to the complex I subunit 3 family. As to quaternary structure, NDH-1 is composed of 13 different subunits. Subunits NuoA, H, J, K, L, M, N constitute the membrane sector of the complex.

The protein resides in the cell inner membrane. It catalyses the reaction a quinone + NADH + 5 H(+)(in) = a quinol + NAD(+) + 4 H(+)(out). Functionally, NDH-1 shuttles electrons from NADH, via FMN and iron-sulfur (Fe-S) centers, to quinones in the respiratory chain. The immediate electron acceptor for the enzyme in this species is believed to be ubiquinone. Couples the redox reaction to proton translocation (for every two electrons transferred, four hydrogen ions are translocated across the cytoplasmic membrane), and thus conserves the redox energy in a proton gradient. In Shigella boydii serotype 18 (strain CDC 3083-94 / BS512), this protein is NADH-quinone oxidoreductase subunit A.